We begin with the raw amino-acid sequence, 81 residues long: MYSVRNSGCSVGCSPRQGASPIMFGPSLGAMLSAPVVRASAPVVRASSPVVKRKSLVKRKSPVKRSPLKKRSQMRTSPCEA.

Residues 46–81 are disordered; sequence ASSPVVKRKSLVKRKSPVKRSPLKKRSQMRTSPCEA. Over residues 51–73 the composition is skewed to basic residues; that stretch reads VKRKSLVKRKSPVKRSPLKKRSQ.

This is an uncharacterized protein from Frog virus 3 (isolate Goorha) (FV-3).